The primary structure comprises 689 residues: uncharacterized protein (689 aa).

Residue Ser-566 participates in substrate binding. Residue Tyr-579 is the Proton acceptor of the active site.

It belongs to the short-chain dehydrogenases/reductases (SDR) family.

This is an uncharacterized protein from Bacillus subtilis (strain 168).